Reading from the N-terminus, the 498-residue chain is ATP synthase subunit beta, chloroplastic (498 aa).

T6 bears the Phosphothreonine mark. At S13 the chain carries Phosphoserine. Residue 172–179 (GGAGVGKT) participates in ATP binding.

Belongs to the ATPase alpha/beta chains family. In terms of assembly, F-type ATPases have 2 components, CF(1) - the catalytic core - and CF(0) - the membrane proton channel. CF(1) has five subunits: alpha(3), beta(3), gamma(1), delta(1), epsilon(1). CF(0) has four main subunits: a(1), b(1), b'(1) and c(9-12).

The protein resides in the plastid. Its subcellular location is the chloroplast thylakoid membrane. The enzyme catalyses ATP + H2O + 4 H(+)(in) = ADP + phosphate + 5 H(+)(out). Produces ATP from ADP in the presence of a proton gradient across the membrane. The catalytic sites are hosted primarily by the beta subunits. This is ATP synthase subunit beta, chloroplastic from Nasturtium officinale (Watercress).